Here is a 309-residue protein sequence, read N- to C-terminus: HPr kinase/phosphorylase (309 aa).

Catalysis depends on residues His-138 and Lys-159. 153 to 160 (GQSGVGKS) is a binding site for ATP. Ser-160 is a Mg(2+) binding site. Catalysis depends on Asp-177, which acts as the Proton acceptor; for phosphorylation activity. Proton donor; for dephosphorylation activity. An important for the catalytic mechanism of both phosphorylation and dephosphorylation region spans residues 201 to 210 (LEIRGLGIIN). Glu-202 is a Mg(2+) binding site. Residue Arg-243 is part of the active site. The important for the catalytic mechanism of dephosphorylation stretch occupies residues 264–269 (PVRPGR).

Belongs to the HPrK/P family. As to quaternary structure, homohexamer. Mg(2+) is required as a cofactor.

The enzyme catalyses [HPr protein]-L-serine + ATP = [HPr protein]-O-phospho-L-serine + ADP + H(+). It carries out the reaction [HPr protein]-O-phospho-L-serine + phosphate + H(+) = [HPr protein]-L-serine + diphosphate. Catalyzes the ATP- as well as the pyrophosphate-dependent phosphorylation of a specific serine residue in HPr, a phosphocarrier protein of the phosphoenolpyruvate-dependent sugar phosphotransferase system (PTS). HprK/P also catalyzes the pyrophosphate-producing, inorganic phosphate-dependent dephosphorylation (phosphorolysis) of seryl-phosphorylated HPr (P-Ser-HPr). The two antagonistic activities of HprK/P are regulated by several intracellular metabolites, which change their concentration in response to the absence or presence of rapidly metabolisable carbon sources (glucose, fructose, etc.) in the growth medium. Also phosphorylates/dephosphorylates the HPr-like catabolite repression protein crh on a specific serine residue. Therefore, by controlling the phosphorylation state of HPr and crh, HPrK/P is a sensor enzyme that plays a major role in the regulation of carbon metabolism and sugar transport: it mediates carbon catabolite repression (CCR), and regulates PTS-catalyzed carbohydrate uptake and inducer exclusion. This is HPr kinase/phosphorylase from Bacillus cereus (strain AH820).